Here is a 354-residue protein sequence, read N- to C-terminus: Probable L-ascorbate-6-phosphate lactonase UlaG (354 aa).

Belongs to the UlaG family. Requires a divalent metal cation as cofactor.

It is found in the cytoplasm. The enzyme catalyses L-ascorbate 6-phosphate + H2O = 3-dehydro-L-gulonate 6-phosphate. Its pathway is cofactor degradation; L-ascorbate degradation; D-xylulose 5-phosphate from L-ascorbate: step 1/4. Its function is as follows. Probably catalyzes the hydrolysis of L-ascorbate-6-P into 3-keto-L-gulonate-6-P. Is essential for L-ascorbate utilization under anaerobic conditions. The chain is Probable L-ascorbate-6-phosphate lactonase UlaG from Salmonella agona (strain SL483).